Here is a 293-residue protein sequence, read N- to C-terminus: SAGA-associated factor 29 (293 aa).

A coiled-coil region spans residues 3-86 (LVSADSRIAE…LRKALDKIAE (84 aa)). The SGF29 C-terminal domain occupies 152-293 (GDYVAKPGDK…VVACKEPKKK (142 aa)). 2 histone H3K4me3 N-terminus binding regions span residues 194 to 196 (DID) and 240 to 243 (QTTC). Residues 264–266 (FED) are histone H3K4me3 binding. Lys-288 bears the N6-acetyllysine mark.

The protein belongs to the SGF29 family. As to quaternary structure, interacts with dimethylated and trimethylated 'Lys-4' of histone H3 (H3K4me2 and H3K4me3), with a preference for the trimethylated form (H3K4me3). Component of some SAGA-type complexes. Component of the ADA2A-containing complex (ATAC), composed of KAT14, KAT2A, TADA2L, TADA3L, ZZ3, MBIP, WDR5, YEATS2, CCDC101 and DR1. Interacts with (methylated) CGAS. Interacts with TADA3L, GCN5L2, SUPT3H and MYC.

Its subcellular location is the nucleus. In terms of biological role, chromatin reader component of some histone acetyltransferase (HAT) SAGA-type complexes like the TFTC-HAT, ATAC or STAGA complexes. SGF29 specifically recognizes and binds methylated 'Lys-4' of histone H3 (H3K4me), with a preference for trimethylated form (H3K4me3). In the SAGA-type complexes, SGF29 is required to recruit complexes to H3K4me. Involved in the response to endoplasmic reticulum (ER) stress by recruiting the SAGA complex to H3K4me, thereby promoting histone H3 acetylation and cell survival. Also binds non-histone proteins that are methylated on Lys residues: specifically recognizes and binds CGAS monomethylated on 'Lys-491'. This Mus musculus (Mouse) protein is SAGA-associated factor 29.